Reading from the N-terminus, the 268-residue chain is Diaminopimelate epimerase (268 aa).

Residues Asn-13, Gln-46, and Asn-64 each coordinate substrate. Cys-73 serves as the catalytic Proton donor. Residues Gly-74–Asn-75, Asn-148, Asn-181, and Glu-199–Arg-200 each bind substrate. Cys-208 (proton acceptor) is an active-site residue. Gly-209–Thr-210 is a substrate binding site.

The protein belongs to the diaminopimelate epimerase family. Homodimer.

It localises to the cytoplasm. The catalysed reaction is (2S,6S)-2,6-diaminopimelate = meso-2,6-diaminopimelate. The protein operates within amino-acid biosynthesis; L-lysine biosynthesis via DAP pathway; DL-2,6-diaminopimelate from LL-2,6-diaminopimelate: step 1/1. Catalyzes the stereoinversion of LL-2,6-diaminopimelate (L,L-DAP) to meso-diaminopimelate (meso-DAP), a precursor of L-lysine and an essential component of the bacterial peptidoglycan. The chain is Diaminopimelate epimerase from Sphingopyxis alaskensis (strain DSM 13593 / LMG 18877 / RB2256) (Sphingomonas alaskensis).